Reading from the N-terminus, the 186-residue chain is ADP-ribosylation factor-like protein 8 (186 aa).

An intramembrane region (note=Mediates targeting to membranes) is located at residues 1–19 (MLALINRILEWFKSIFWKE). GTP is bound by residues 29 to 35 (QFSGKTT), 71 to 75 (DIGGQ), and 130 to 133 (NKRD).

Belongs to the small GTPase superfamily. Arf family. Interacts with tubulin. Interacts (in GTP-bound form) with Rilpl. Interacts with unc-104. Expressed throughout development, from embryo to adult stage, in different tissues such as larval motor neurons, salivary glands, testis and ovaries (at protein level).

It localises to the lysosome membrane. The protein resides in the synapse. It is found in the cell projection. The protein localises to the axon. Its subcellular location is the perikaryon. Its function is as follows. Required for normal functioning of the late endocytic pathway including lysosome motility and late endosome-lysosome fusion. Not required for the delivery of lysosomal membrane protein-containing vesicles to late endosomes. In larval motor neurons, mediates the anterograde axonal long-range transport of presynaptic lysosome-related vesicles required for presynaptic biogenesis and synaptic function. Acts downstream of Rab2 during presynaptic precursor vesicle biogenesis. Essential role in chromosome segregation. The protein is ADP-ribosylation factor-like protein 8 of Drosophila melanogaster (Fruit fly).